The chain runs to 505 residues: Histidine ammonia-lyase (505 aa).

Positions 141-143 (ASG) form a cross-link, 5-imidazolinone (Ala-Gly). Ser-142 is subject to 2,3-didehydroalanine (Ser).

It belongs to the PAL/histidase family. In terms of processing, contains an active site 4-methylidene-imidazol-5-one (MIO), which is formed autocatalytically by cyclization and dehydration of residues Ala-Ser-Gly.

The protein resides in the cytoplasm. The catalysed reaction is L-histidine = trans-urocanate + NH4(+). It functions in the pathway amino-acid degradation; L-histidine degradation into L-glutamate; N-formimidoyl-L-glutamate from L-histidine: step 1/3. The protein is Histidine ammonia-lyase of Bacillus mycoides (strain KBAB4) (Bacillus weihenstephanensis).